A 524-amino-acid polypeptide reads, in one-letter code: Cytochrome P450 4F11 (524 aa).

A helical transmembrane segment spans residues Ala15 to Trp37. A 4-hydroxynonenal-conjugated cysteine mark is found at Cys45 and Cys260. Position 261 is a 4-hydroxynonenal-conjugated histidine (His261). Glu328 contributes to the heme binding site. The residue at position 347 (His347) is a 4-hydroxynonenal-conjugated histidine. The residue at position 354 (Cys354) is a 4-hydroxynonenal-conjugated cysteine. Residue Lys451 is modified to 4-hydroxynonenal-conjugated lysine. Cys468 contributes to the heme binding site.

This sequence belongs to the cytochrome P450 family. Heme is required as a cofactor. 4-hydroxynonenal conjugation impairs substrate binding and the long-chain fatty acid omega-monooxygenase activity. As to expression, expressed mainly in human liver, followed by kidney, heart, and skeletal muscle.

The protein localises to the endoplasmic reticulum membrane. It localises to the microsome membrane. It carries out the reaction an organic molecule + reduced [NADPH--hemoprotein reductase] + O2 = an alcohol + oxidized [NADPH--hemoprotein reductase] + H2O + H(+). The enzyme catalyses an omega-methyl-long-chain fatty acid + reduced [NADPH--hemoprotein reductase] + O2 = an omega-hydroxy-long-chain fatty acid + oxidized [NADPH--hemoprotein reductase] + H2O + H(+). It catalyses the reaction dodecanoate + reduced [NADPH--hemoprotein reductase] + O2 = 12-hydroxydodecanoate + oxidized [NADPH--hemoprotein reductase] + H2O + H(+). The catalysed reaction is hexadecanoate + reduced [NADPH--hemoprotein reductase] + O2 = 16-hydroxyhexadecanoate + oxidized [NADPH--hemoprotein reductase] + H2O + H(+). It carries out the reaction (9Z)-octadecenoate + reduced [NADPH--hemoprotein reductase] + O2 = 18-hydroxy-(9Z)-octadecenoate + oxidized [NADPH--hemoprotein reductase] + H2O + H(+). The enzyme catalyses (5Z,8Z,11Z,14Z)-eicosatetraenoate + reduced [NADPH--hemoprotein reductase] + O2 = 20-hydroxy-(5Z,8Z,11Z,14Z)-eicosatetraenoate + oxidized [NADPH--hemoprotein reductase] + H2O + H(+). It catalyses the reaction (4Z,7Z,10Z,13Z,16Z,19Z)-docosahexaenoate + reduced [NADPH--hemoprotein reductase] + O2 = 22-hydroxy-(4Z,7Z,10Z,13Z,16Z,19Z)-docosahexaenoate + oxidized [NADPH--hemoprotein reductase] + H2O + H(+). The catalysed reaction is 8-hydroxy-(5Z,9E,11Z,14Z)-eicosatetraenoate + reduced [NADPH--hemoprotein reductase] + O2 = 8,20-dihydroxy-(5Z,9E,11Z,14Z)-eicosatetraenoate + oxidized [NADPH--hemoprotein reductase] + H2O + H(+). It carries out the reaction 3-hydroxyhexadecanoate + reduced [NADPH--hemoprotein reductase] + O2 = 3,16-dihydroxyhexadecanoate + oxidized [NADPH--hemoprotein reductase] + H2O + H(+). The enzyme catalyses 3-hydroxyoctadecanoate + reduced [NADPH--hemoprotein reductase] + O2 = 3,18-dihydroxyoctadecanoate + oxidized [NADPH--hemoprotein reductase] + H2O + H(+). It catalyses the reaction phylloquinone + reduced [NADPH--hemoprotein reductase] + O2 = omega-hydroxyphylloquinone + oxidized [NADPH--hemoprotein reductase] + H2O + H(+). The catalysed reaction is menaquinone-4 + reduced [NADPH--hemoprotein reductase] + O2 = omega-hydroxymenaquinone-4 + oxidized [NADPH--hemoprotein reductase] + H2O + H(+). It carries out the reaction 2-hexyl-5-pentylresorcinol + reduced [NADPH--hemoprotein reductase] + O2 = 2-hexyl-5-(5-hydroxypentyl)resorcinol + oxidized [NADPH--hemoprotein reductase] + H2O + H(+). The enzyme catalyses 2-hexyl-5-heptylresorcinol + reduced [NADPH--hemoprotein reductase] + O2 = 2-hexyl-5-(7-hydroxyheptyl)resorcinol + oxidized [NADPH--hemoprotein reductase] + H2O + H(+). It catalyses the reaction 12-hydroxy-(5Z,8Z,10E,14Z)-eicosatetraenoate + reduced [NADPH--hemoprotein reductase] + O2 = 12,20-dihydroxy-(5Z,8Z,10E,14Z)-eicosatetraenoate + oxidized [NADPH--hemoprotein reductase] + H2O + H(+). The catalysed reaction is 15-hydroxy-(5Z,8Z,11Z,13E)-eicosatetraenoate + reduced [NADPH--hemoprotein reductase] + O2 = 15,20-dihydroxy-(5Z,8Z,11Z,13E)-eicosatetraenoate + oxidized [NADPH--hemoprotein reductase] + H2O + H(+). It functions in the pathway lipid metabolism; arachidonate metabolism. It participates in lipid metabolism; oxylipin biosynthesis. The protein operates within cofactor degradation; phylloquinone degradation. Its pathway is xenobiotic degradation. With respect to regulation, inhibition of the long-chain fatty acid omega-monooxygenase activity by 4-hydroxynonenal (4-HNE) conjugation. Its function is as follows. A cytochrome P450 monooxygenase involved in the metabolism of various endogenous substrates, including fatty acids and their oxygenated derivatives (oxylipins). Mechanistically, uses molecular oxygen inserting one oxygen atom into a substrate, and reducing the second into a water molecule, with two electrons provided by NADPH via cytochrome P450 reductase (CPR; NADPH-ferrihemoprotein reductase). Catalyzes with high efficiency the oxidation of the terminal carbon (omega-oxidation) of 3-hydroxy fatty acids, such as 3-hydroxyhexadecanoic and 3-hydroxyoctadecanoic acids, likely participating in the biosynthesis of long-chain 3-hydroxydicarboxylic acids. Omega-hydroxylates and inactivates phylloquinone (vitamin K1), and menaquinone-4 (MK-4, a form of vitamin K2), both acting as cofactors in blood coagulation. Metabolizes with low efficiciency fatty acids, including (5Z,8Z,11Z,14Z)-eicosatetraenoic acid (arachidonate) and its oxygenated metabolite 8-hydroxyeicosatetraenoic acid (8-HETE). Catalyzes N- and O-demethylation of drugs such as erythromycin, benzphetamine, ethylmorphine, chlorpromazine, imipramine and verapamil. Catalyzes the oxidation of dialkylresorcinol 2. The protein is Cytochrome P450 4F11 of Homo sapiens (Human).